The primary structure comprises 479 residues: F-box/LRR-repeat protein 16 (479 aa).

A disordered region spans residues 1-92; sequence MSSPGIDGDP…GPVSGPPVER (92 aa). A compositionally biased stretch (pro residues) spans 47–60; the sequence is CQPPPPPTLPPPSL. R92 carries the post-translational modification Omega-N-methylarginine. Positions 94–139 constitute an F-box domain; sequence PLATDEKILNGLFWYFSACEKCILAQVCKAWRRVLYQPKFWAGLTP. LRR repeat units lie at residues 321 to 342, 347 to 369, 373 to 394, 398 to 419, 423 to 444, and 446 to 470; these read NLTSLSLSGCSKVTDDGVELVA, KLRSLDLSWCPRITDMALEYVAC, RLEELVLDRCVRITDTGLSYLS, SLRSLYLRWCCQVQDFGLKHLL, NLRLLSLAGCPLLTTTGLSGLV, and LQELEELELTNCPGATPELFKYFSQ.

As to quaternary structure, interacts with SKP1 and CUL1.

In terms of biological role, substrate-recognition component of the SCF (SKP1-CUL1-F-box protein)-type E3 ubiquitin ligase complex. The sequence is that of F-box/LRR-repeat protein 16 (Fbxl16) from Mus musculus (Mouse).